The sequence spans 146 residues: MFVGEYYHSLDEKGRLIIPNDFRQLLGETFYLTRGFERCLNIYTITDWNNFSQIISSFSPTDNLMRKLCRFWFSGSIQVTTDKLGRILIPSFLIEYAELSKEVVIIGAGKHIEIWAKEKWEEFNKEENILENMNEINSKVAELWKK.

2 consecutive SpoVT-AbrB domains span residues 5–47 (EYYH…TITD) and 76–119 (SIQV…AKEK).

It belongs to the MraZ family. In terms of assembly, forms oligomers.

Its subcellular location is the cytoplasm. The protein resides in the nucleoid. The chain is Transcriptional regulator MraZ from Dictyoglomus thermophilum (strain ATCC 35947 / DSM 3960 / H-6-12).